Reading from the N-terminus, the 809-residue chain is Chorion peroxidase (809 aa).

The first 21 residues, 1–21 (MSRILFILLLLIVTQLSELQA), serve as a signal peptide directing secretion. Positions 22-223 (AAFSVRQNRF…KFTETPLAHH (202 aa)) are excised as a propeptide. A disordered region spans residues 36–55 (DLQTPAPLATSTESSKKPEK). Asn110 is a glycosylation site (N-linked (GlcNAc...) asparagine). At Cys224 the chain carries N-acetylcysteine; in Chorion peroxidase light chain. Cys230 and Cys244 are disulfide-bonded. Residue His320 is the Proton acceptor of the active site. A disulfide bridge links Cys448 with Cys457. Residue His568 coordinates heme b. The cysteines at positions 765 and 794 are disulfide-linked.

This sequence belongs to the peroxidase family. XPO subfamily. In terms of assembly, heterodimer. Heme b serves as cofactor. As to expression, expressed at low levels in the germarium and early follicles. Expression becomes progressively stronger during vitellogenesis, and is highly expressed in germ cells and somatic cells. A subset of follicle cells, termed border cells (BC), exhibit a high level of expression.

Its subcellular location is the secreted. The catalysed reaction is 2 a phenolic donor + H2O2 = 2 a phenolic radical donor + 2 H2O. Its function is as follows. Required for ovarian follicle maturation. Involved in the formation of a rigid and insoluble egg chorion by catalyzing chorion protein cross-linking through dityrosine formation and phenol oxidase-catalyzed chorion melanization. This chain is Chorion peroxidase (Pxt), found in Drosophila melanogaster (Fruit fly).